The sequence spans 253 residues: Triosephosphate isomerase (253 aa).

A substrate-binding site is contributed by 9–11 (NWK). H94 (electrophile) is an active-site residue. Residue E163 is the Proton acceptor of the active site. Substrate is bound by residues G169, S209, and 230 to 231 (GG).

This sequence belongs to the triosephosphate isomerase family. In terms of assembly, homodimer.

The protein resides in the cytoplasm. The catalysed reaction is D-glyceraldehyde 3-phosphate = dihydroxyacetone phosphate. It functions in the pathway carbohydrate biosynthesis; gluconeogenesis. It participates in carbohydrate degradation; glycolysis; D-glyceraldehyde 3-phosphate from glycerone phosphate: step 1/1. Functionally, involved in the gluconeogenesis. Catalyzes stereospecifically the conversion of dihydroxyacetone phosphate (DHAP) to D-glyceraldehyde-3-phosphate (G3P). In Dehalococcoides mccartyi (strain CBDB1), this protein is Triosephosphate isomerase.